The following is a 306-amino-acid chain: MIKQRTLKQATTVTGIGLHSGQKVKLTLRPAPANTGIIYARTDLTPAVYFTADANLVGDTTLCTCMINDDGVRISTVEHLNAAVSALGLDNLIIEVNAPEVPIMDGSSSPFIYLLLDAGIEEQESPKKFIRIKQTVRIEDGDKWAELKPYNNGLKLDFTIEFNHPMISKDVRHFNMELSAKNFIHNISRARTFTFMKDVEYLQSMGLALGGSLDNAIVLDEYRILNEEGLRYKDELVKHKMLDSIGDLFMCGYNILGEFTAYKSGHGLNNKLLRAVLANKNAWEFVTFDDTQQAPQGYQIGEQVFI.

His-79, His-239, and Asp-243 together coordinate Zn(2+). Residue His-266 is the Proton donor of the active site.

Belongs to the LpxC family. The cofactor is Zn(2+).

It catalyses the reaction a UDP-3-O-[(3R)-3-hydroxyacyl]-N-acetyl-alpha-D-glucosamine + H2O = a UDP-3-O-[(3R)-3-hydroxyacyl]-alpha-D-glucosamine + acetate. Its pathway is glycolipid biosynthesis; lipid IV(A) biosynthesis; lipid IV(A) from (3R)-3-hydroxytetradecanoyl-[acyl-carrier-protein] and UDP-N-acetyl-alpha-D-glucosamine: step 2/6. In terms of biological role, catalyzes the hydrolysis of UDP-3-O-myristoyl-N-acetylglucosamine to form UDP-3-O-myristoylglucosamine and acetate, the committed step in lipid A biosynthesis. This chain is UDP-3-O-acyl-N-acetylglucosamine deacetylase, found in Haemophilus ducreyi (strain 35000HP / ATCC 700724).